We begin with the raw amino-acid sequence, 111 residues long: MEATAILRGARISPQKARLVAAQVRGLSAESAVNILRFSSKKAACLIKKVVESAIANAENNHGSNIDALKINTIIVDEGRMLKRFMARAKGRSSRIVKRSSHITVVVGPAK.

The protein belongs to the universal ribosomal protein uL22 family. In terms of assembly, part of the 50S ribosomal subunit.

Its function is as follows. This protein binds specifically to 23S rRNA; its binding is stimulated by other ribosomal proteins, e.g. L4, L17, and L20. It is important during the early stages of 50S assembly. It makes multiple contacts with different domains of the 23S rRNA in the assembled 50S subunit and ribosome. In terms of biological role, the globular domain of the protein is located near the polypeptide exit tunnel on the outside of the subunit, while an extended beta-hairpin is found that lines the wall of the exit tunnel in the center of the 70S ribosome. This is Large ribosomal subunit protein uL22 from Xylella fastidiosa (strain 9a5c).